Here is a 1334-residue protein sequence, read N- to C-terminus: DNA-directed RNA polymerase subunit beta' (1334 aa).

Cys213, Cys284, Cys291, and Cys294 together coordinate Zn(2+). Residues 1299 to 1308 (SSRGSSRFSR) are compositionally biased toward low complexity. The interval 1299–1334 (SSRGSSRFSRQPISDRWSEADEEGEEDDFEEDYEEE) is disordered. Residues 1318–1334 (ADEEGEEDDFEEDYEEE) are compositionally biased toward acidic residues.

This sequence belongs to the RNA polymerase beta' chain family. RpoC2 subfamily. In cyanobacteria the RNAP catalytic core is composed of 2 alpha, 1 beta, 1 beta', 1 gamma and 1 omega subunit. When a sigma factor is associated with the core the holoenzyme is formed, which can initiate transcription. Zn(2+) is required as a cofactor.

The catalysed reaction is RNA(n) + a ribonucleoside 5'-triphosphate = RNA(n+1) + diphosphate. In terms of biological role, DNA-dependent RNA polymerase catalyzes the transcription of DNA into RNA using the four ribonucleoside triphosphates as substrates. This is DNA-directed RNA polymerase subunit beta' from Microcystis aeruginosa (strain NIES-843 / IAM M-2473).